A 2209-amino-acid polypeptide reads, in one-letter code: Orsellinic acid synthase armB (2209 aa).

An N-terminal acylcarrier protein transacylase domain (SAT) region spans residues 38-261 (LLLDACYYAF…HKTTVDALYH (224 aa)). The 427-residue stretch at 391 to 817 (QEPIAICGMS…GSNGALLLEE (427 aa)) folds into the Ketosynthase family 3 (KS3) domain. Catalysis depends on for beta-ketoacyl synthase activity residues cysteine 561, histidine 696, and histidine 736. The tract at residues 914–1239 (VFVFSGQGGQ…NLTLSSSLSQ (326 aa)) is malonyl-CoA:ACP transacylase (MAT) domain. Serine 1008 serves as the catalytic For acyl/malonyl transferase activity. Residues 1306–1436 (MLQSWAQFPS…GQFRPLLVAD (131 aa)) form an N-terminal hotdog fold region. In terms of domain architecture, PKS/mFAS DH spans 1306 to 1613 (MLQSWAQFPS…FKKLRLNTLQ (308 aa)). The interval 1335 to 1610 (ITGHIVGDVP…GMCFKKLRLN (276 aa)) is product template (PT) domain. The active-site Proton acceptor; for dehydratase activity is histidine 1338. The segment at 1463–1613 (AEVITTRTAY…FKKLRLNTLQ (151 aa)) is C-terminal hotdog fold. Residue aspartate 1524 is the Proton donor; for dehydratase activity of the active site. 2 Carrier domains span residues 1659–1734 (VDVQ…SSTI) and 1844–1921 (SSSS…SSKQ). Serine 1693 and serine 1881 each carry O-(pantetheine 4'-phosphoryl)serine. The tract at residues 1917-1945 (ISSKQPGKSPKPSEEATMDPDKEEDLSDL) is disordered. The span at 1932-1943 (ATMDPDKEEDLS) shows a compositional bias: acidic residues. The interval 1962-2201 (VPMSVQKSSS…LGAVTQALVD (240 aa)) is thioesterase (TE) domain.

It carries out the reaction 3 malonyl-CoA + acetyl-CoA + 2 H(+) = orsellinate + 3 CO2 + 4 CoA. Its pathway is secondary metabolite biosynthesis. In terms of biological role, non-reducing polyketide synthase, part of the gene cluster that mediates the biosynthesis of melleolides, a range of antifungal and phytotoxic polyketide derivatives composed of an orsellinic acid (OA) moiety esterified to various sesquiterpene alcohols. The first step in melleolides biosynthesis is performed by the delta(6)-protoilludene synthase PRO1 which catalyzes the cyclization of farnesyl diphosphate to protoilludene. The orsellinic acid synthase armB produces OA by condensing acetyl-CoA with 3 malonyl-CoA units in a three-round chain elongation reaction folowed by a C2-C7 ring closure. ArmB further catalyzes the trans-esterification of OA to the various sesquiterpene alcohols resulting from the hydroxylation of protoilludene. The melleolides cluster also includes 5 cytochrome P450 monooxygenases, 4 NAD(+)-dependent oxidoreductases, one flavin-dependent oxidoreductase, and one O-methyltransferase. The cytochrome P450 monooxygenases may be involved in protoilludene hydroxylation to elaborate melleolides with multiple alcohol groups, such as melleolide D, which carries alcohol functionalities at C-4, C-5, C-10, and C-13. The role of the NAD(+)-dependent enzymes remains unknown. Numerous melleolides, including arnamial, show 5'-O-methylation of the aromatic moiety which may be catalyzed by the methyltransferase encoded in the cluster. The flavin-dependent oxidoreductase might represent the dehydrogenase yielding the aldehyde in position 1 of arnamial and other melleolides. Finally, several halogenase localized outside of the cluster (armH1 to armH5), are able to catalyze the transfer of a single chlorine atom to the melleolide backbone, resulting in a 6'-chloromelleolide product. This Armillaria mellea (Honey mushroom) protein is Orsellinic acid synthase armB.